Consider the following 149-residue polypeptide: MNKGQRLIKIRDIVTNREIETQDELVDELRRSGYPVTQATVSRDIKELHLVKVPLNDGRYKYSLPADQRFNPYGKMKRILSDSFVSVDSAQNLVVMKVLPGNADAIGVLIDHLSWDELIGTVCGDDTILMIARDEEKAKQIIDRLLGML.

The protein belongs to the ArgR family.

The protein localises to the cytoplasm. It functions in the pathway amino-acid biosynthesis; L-arginine biosynthesis [regulation]. Its function is as follows. Regulates arginine biosynthesis genes. In Exiguobacterium sp. (strain ATCC BAA-1283 / AT1b), this protein is Arginine repressor.